The primary structure comprises 61 residues: MAVPKRKKSKSRRNMHRSHCRLKVPNIGIDKTTGEYKLSHHVCLGGYYNEKQVLEVDSSNV.

This sequence belongs to the bacterial ribosomal protein bL32 family.

The chain is Large ribosomal subunit protein bL32 from Ehrlichia chaffeensis (strain ATCC CRL-10679 / Arkansas).